The primary structure comprises 263 residues: Small ribosomal subunit protein uS3 (263 aa).

Positions Val39–Arg107 constitute a KH type-2 domain. The tract at residues Gly211–Glu263 is disordered. The segment covering Thr219 to Arg240 has biased composition (basic and acidic residues).

It belongs to the universal ribosomal protein uS3 family. In terms of assembly, part of the 30S ribosomal subunit. Forms a tight complex with proteins S10 and S14.

Its function is as follows. Binds the lower part of the 30S subunit head. Binds mRNA in the 70S ribosome, positioning it for translation. The chain is Small ribosomal subunit protein uS3 from Bordetella petrii (strain ATCC BAA-461 / DSM 12804 / CCUG 43448).